Reading from the N-terminus, the 598-residue chain is Glutamyl-tRNA(Gln) amidotransferase subunit E (598 aa).

The protein belongs to the GatB/GatE family. GatE subfamily. Heterodimer of GatD and GatE.

It catalyses the reaction L-glutamyl-tRNA(Gln) + L-glutamine + ATP + H2O = L-glutaminyl-tRNA(Gln) + L-glutamate + ADP + phosphate + H(+). Its function is as follows. Allows the formation of correctly charged Gln-tRNA(Gln) through the transamidation of misacylated Glu-tRNA(Gln) in organisms which lack glutaminyl-tRNA synthetase. The reaction takes place in the presence of glutamine and ATP through an activated gamma-phospho-Glu-tRNA(Gln). The GatDE system is specific for glutamate and does not act on aspartate. This Thermoplasma volcanium (strain ATCC 51530 / DSM 4299 / JCM 9571 / NBRC 15438 / GSS1) protein is Glutamyl-tRNA(Gln) amidotransferase subunit E.